The chain runs to 440 residues: Tetratricopeptide repeat protein 5 (440 aa).

TPR repeat units follow at residues 7-61, 68-98, 103-130, 136-174, and 179-216; these read EEVK…EEVV, AQVLMLTGKALNVTPDYSPKAEELLSKAVKL, VEAWNQLGEVYWKKGDVAAAHTCFSGAL, KVSLQNLSMVLRQLRTDSGDEHSRHVMDSVRQAKLAVQM, and GRSWYILGNAYLSLYFNTGQNPKISQQALSAYAQAEKV. The Nuclear export signal motif lies at 13–24; that stretch reads LQKLQELVDQLY. At S203 the chain carries Phosphoserine; by ATM. A Phosphoserine; by CHEK2 modification is found at S221. The stretch at 224 to 253 is one TPR 6 repeat; sequence PDLHLNRATLHKYEENYGEALEGFSRAAAL. Positions 285–287 are mediates interaction with 28S rRNA of ribosome-coding tubulin; the sequence is KTK.

In terms of assembly, interacts with JMY and p300/EP300; the interaction occurs in the nucleus and augments the association between JMY and p300/EP300 in response to DNA damage. Interacts with PRMT5; the interaction is DNA damage-dependent and promotes PRMT5 interaction with p53/TP53 and subsequent methylation. Forms a complex with HSF1 and p300/EP300; these interactions augment chromatin-bound HSF1 and p300/EP300 histone acetyltransferase activity, resulting in enhanced heat-shock-responsive transcription. Interacts with JMY; the interaction occurs in the cytoplasm and results in the inhibition of JYM's nucleation activity. Interacts with ribosome-coding tubulin (via 60S subunit 28S rRNA and protein uL24/RPL26) and the N-terminal of nascent tubulin polypeptide (via alpha-tubulin MREC motif and beta-tubulin MREI motif); these interactions result in tubulin mRNA-targeted degradation. Interacts with ATP5F1B; the interaction occurs in the mitochondria and results in ATP production decrease. Interacts with p53/TP53; the interaction occurs in the mitochondria and results in increased apoptosis. Post-translationally, phosphorylation by ATM kinase induces nuclear accumulation while interfering with nuclear export, and phosphorylation by CHEK2 kinase enhances nuclear stability.

The protein localises to the nucleus. It is found in the cytoplasm. Its subcellular location is the cytoplasmic vesicle. The protein resides in the mitochondrion matrix. Its function is as follows. Cofactor involved in the regulation of various cellular mechanisms such as actin regulation, autophagy, chromatin regulation and DNA repair. In physiological conditions, interacts with cofactor JMY in the cytoplasm which prevents JMY's actin nucleation activity and ability to activate the Arp2/3 complex. Acts as a negative regulator of nutrient stress-induced autophagy by inhibiting JMY's interaction with MAP1LC3B, thereby preventing autophagosome formation. Involves in tubulin autoregulation by promoting its degradation in response to excess soluble tubulin. To do so, associates with the active ribosome near the ribosome exit tunnel and with nascent tubulin polypeptides early during their translation, triggering tubulin mRNA-targeted degradation. Following DNA damage, phosphorylated by DNA damage responsive protein kinases ATM and CHEK2, leading to its nuclear accumulation and stability. Nuclear TTC5/STRAP promotes the assembly of a stress-responsive p53/TP53 coactivator complex, which includes the coactivators JMY and p300, thereby increasing p53/TP53-dependent transcription and apoptosis. Also recruits arginine methyltransferase PRMT5 to p53/TP53 when DNA is damaged, allowing PRMT5 to methylate p53/TP53. In DNA stress conditions, also prevents p53/TP53 degradation by E3 ubiquitin ligase MDM2. Upon heat-shock stress, forms a chromatin-associated complex with heat-shock factor 1 HSF1 and p300/EP300 to stimulate heat-shock-responsive transcription, thereby increasing cell survival. Mitochondrial TTC5/STRAP interacts with ATP synthase subunit beta ATP5F1B which decreased ATP synthase activity and lowers mitochondrial ATP production, thereby regulating cellular respiration and mitochondrial-dependent apoptosis. Mitochondrial TTC5/STRAP also regulates p53/TP53-mediated apoptosis. This is Tetratricopeptide repeat protein 5 (TTC5) from Bos taurus (Bovine).